A 125-amino-acid polypeptide reads, in one-letter code: Holo-[acyl-carrier-protein] synthase (125 aa).

Glu-9 and Gln-58 together coordinate Mg(2+).

This sequence belongs to the P-Pant transferase superfamily. AcpS family. The cofactor is Mg(2+).

It localises to the cytoplasm. The enzyme catalyses apo-[ACP] + CoA = holo-[ACP] + adenosine 3',5'-bisphosphate + H(+). Transfers the 4'-phosphopantetheine moiety from coenzyme A to a Ser of acyl-carrier-protein. This chain is Holo-[acyl-carrier-protein] synthase, found in Rhodopirellula baltica (strain DSM 10527 / NCIMB 13988 / SH1).